We begin with the raw amino-acid sequence, 140 residues long: Organic hydroperoxide resistance protein-like (140 aa).

The protein belongs to the OsmC/Ohr family.

The protein is Organic hydroperoxide resistance protein-like of Staphylococcus aureus (strain MRSA252).